The primary structure comprises 363 residues: Probable tRNA pseudouridine synthase D (363 aa).

D82 functions as the Nucleophile in the catalytic mechanism. The region spanning 151-363 is the TRUD domain; sequence YLPAYIGYQR…IARTDPRLFT (213 aa).

This sequence belongs to the pseudouridine synthase TruD family.

It catalyses the reaction uridine(13) in tRNA = pseudouridine(13) in tRNA. Its function is as follows. Could be responsible for synthesis of pseudouridine from uracil-13 in transfer RNAs. This chain is Probable tRNA pseudouridine synthase D, found in Sulfurisphaera tokodaii (strain DSM 16993 / JCM 10545 / NBRC 100140 / 7) (Sulfolobus tokodaii).